Consider the following 347-residue polypeptide: Ultraviolet-sensitive opsin (347 aa).

The Extracellular portion of the chain corresponds to 1–37 (MSGEEEFYLFKNGSIGGPWDGPQYHIAPPWAFYLQTA). N-linked (GlcNAc...) asparagine glycosylation is present at N12. Residues 38–58 (FMGFVFMVGTPLNAIVLVVTI) form a helical membrane-spanning segment. The Cytoplasmic segment spans residues 59–69 (KYKKLRQPLNY). Residues 70-90 (ILVNISFCGFLACIICIFTVF) traverse the membrane as a helical segment. Topologically, residues 91 to 106 (VSSSQGYFVFGKHVCA) are extracellular. A disulfide bridge connects residues C105 and C182. Residues 107 to 127 (FEGFMGATAGLVTGWSLAFLA) traverse the membrane as a helical segment. Over 128-147 (FERYIVICKPLGNFRFTAKH) the chain is Cytoplasmic. A helical membrane pass occupies residues 148-168 (ALVVVVATWVIGIGVAIPPFF). At 169–197 (GWSRYVPEGLQCSCGPDWYTVGTKYRSEY) the chain is on the extracellular side. A helical membrane pass occupies residues 198–218 (YTWFLFIFCFIVPLSLIIFSY). The Cytoplasmic segment spans residues 219–247 (SQLLSALRAVAAQQQESATTQKAEREVSR). A helical membrane pass occupies residues 248 to 268 (MVVVMVGSFCVCYVPYAALAM). The Extracellular segment spans residues 269-282 (YMVNNREHGIDLRL). A helical transmembrane segment spans residues 283–303 (VTIPAFFSKSSCVYNPIIYCF). K291 is modified (N6-(retinylidene)lysine). Residues 304–347 (MNKQFRGCIMEMVCGKPMTDDSDMSSSAQRTEVSSVSSSQVSPS) are Cytoplasmic-facing. C317 carries the S-palmitoyl cysteine lipid modification. Residues 324–347 (DSDMSSSAQRTEVSSVSSSQVSPS) are disordered. The segment covering 328–347 (SSSAQRTEVSSVSSSQVSPS) has biased composition (low complexity).

The protein belongs to the G-protein coupled receptor 1 family. Opsin subfamily. Phosphorylated on some or all of the serine and threonine residues present in the C-terminal region. Cone photoreceptor cells.

Its subcellular location is the membrane. Its function is as follows. Visual pigments are the light-absorbing molecules that mediate vision. They consist of an apoprotein, opsin, covalently linked to cis-retinal. This chain is Ultraviolet-sensitive opsin, found in Melopsittacus undulatus (Budgerigar).